Reading from the N-terminus, the 95-residue chain is Protein RnfH (95 aa).

Belongs to the UPF0125 (RnfH) family.

In Erwinia tasmaniensis (strain DSM 17950 / CFBP 7177 / CIP 109463 / NCPPB 4357 / Et1/99), this protein is Protein RnfH.